The sequence spans 370 residues: Anhydro-N-acetylmuramic acid kinase (370 aa).

Residue 12–19 (GTSLDGID) coordinates ATP.

This sequence belongs to the anhydro-N-acetylmuramic acid kinase family.

The catalysed reaction is 1,6-anhydro-N-acetyl-beta-muramate + ATP + H2O = N-acetyl-D-muramate 6-phosphate + ADP + H(+). It functions in the pathway amino-sugar metabolism; 1,6-anhydro-N-acetylmuramate degradation. Its pathway is cell wall biogenesis; peptidoglycan recycling. Its function is as follows. Catalyzes the specific phosphorylation of 1,6-anhydro-N-acetylmuramic acid (anhMurNAc) with the simultaneous cleavage of the 1,6-anhydro ring, generating MurNAc-6-P. Is required for the utilization of anhMurNAc either imported from the medium or derived from its own cell wall murein, and thus plays a role in cell wall recycling. The protein is Anhydro-N-acetylmuramic acid kinase of Yersinia enterocolitica serotype O:8 / biotype 1B (strain NCTC 13174 / 8081).